An 844-amino-acid polypeptide reads, in one-letter code: 3',5'-cyclic-AMP phosphodiesterase 4A (844 aa).

Positions 1-124 (MEPPAAPSER…RSPLDSQASP (124 aa)) are disordered. Ser13 is modified (phosphoserine). The segment covering 36 to 46 (QPRTPIRIQQR) has biased composition (low complexity). Positions 51–78 (SAERSETERSPHRPIERADAVDTGDRPG) are enriched in basic and acidic residues. Polar residues predominate over residues 82–91 (TRMSWPSSFH). Residue Ser147 is modified to Phosphoserine; by MAPKAPK2. 3 positions are modified to phosphoserine: Ser152, Ser160, and Ser204. Residues 296 to 317 (PSPTPRQRAFQQPPPSVLRQSQ) form a disordered region. At Ser333 the chain carries Phosphoserine. One can recognise a PDEase domain in the interval 343–672 (VKTDQEDLLA…DWYHSAIRQS (330 aa)). A Glycyl lysine isopeptide (Lys-Gly) (interchain with G-Cter in SUMO) cross-link involves residue Lys344. His419 functions as the Proton donor in the catalytic mechanism. His419 provides a ligand contact to 3',5'-cyclic AMP. The AMP site is built by His419 and His423. Zn(2+) contacts are provided by His423, His459, Asp460, and Asp577. AMP is bound by residues Asp460, Asp577, Gln628, and Phe631. Asp460 lines the Mg(2+) pocket. Asp460 is a binding site for Mn(2+). Positions 628 and 631 each coordinate 3',5'-cyclic AMP. 2 disordered regions span residues 668 to 690 (AIRQ…PSLP) and 818 to 844 (SACS…GDPA). A phosphoserine mark is found at Ser672 and Ser674. The span at 820–830 (CSGTSGDNSAI) shows a compositional bias: polar residues.

Belongs to the cyclic nucleotide phosphodiesterase family. PDE4 subfamily. Interacts with LYN (via SH3 domain). Interacts with ARRB2. Zn(2+) serves as cofactor. Mg(2+) is required as a cofactor. Requires Mn(2+) as cofactor. Post-translationally, phosphorylated by MAPKAPK2 at Ser-147; it counteracts PKA-induced activation of PDE4A and modulates intracellular cAMP levels. Likely involved in cellular desensitization to cAMP signaling. Proteolytically cleaved by CASP3. As to expression, isoform 2 is testis specific.

It is found in the cytoplasm. The protein localises to the cytosol. Its subcellular location is the membrane. It catalyses the reaction 3',5'-cyclic AMP + H2O = AMP + H(+). Its pathway is purine metabolism; 3',5'-cyclic AMP degradation; AMP from 3',5'-cyclic AMP: step 1/1. Its activity is regulated as follows. Inhibited by rolipram. Hydrolyzes the second messenger 3',5'-cyclic AMP (cAMP), which is a key regulator of many important physiological processes. Its function is as follows. Efficiently hydrolyzes cAMP. In Rattus norvegicus (Rat), this protein is 3',5'-cyclic-AMP phosphodiesterase 4A (Pde4a).